A 394-amino-acid chain; its full sequence is 4-hydroxyphenylpyruvate dioxygenase (394 aa).

2 VOC domains span residues 18 to 149 (SFHH…LLEY) and 181 to 339 (FIDH…IFTK). Residues His184, His267, and Glu350 each contribute to the Fe cation site.

It belongs to the 4HPPD family. In terms of assembly, homodimer. It depends on Fe cation as a cofactor.

The protein localises to the cytoplasm. It localises to the endoplasmic reticulum membrane. It is found in the golgi apparatus membrane. The catalysed reaction is 3-(4-hydroxyphenyl)pyruvate + O2 = homogentisate + CO2. It functions in the pathway amino-acid degradation; L-phenylalanine degradation; acetoacetate and fumarate from L-phenylalanine: step 3/6. Functionally, catalyzes the conversion of 4-hydroxyphenylpyruvic acid to homogentisic acid, one of the steps in tyrosine catabolism. This Xenopus tropicalis (Western clawed frog) protein is 4-hydroxyphenylpyruvate dioxygenase (hpd).